Consider the following 47-residue polypeptide: MARYRCCRSRSRCRRRRRSCRRRRRCRRRRARRSCRRRYSLRCCRRY.

Belongs to the protamine P1 family. Testis.

The protein resides in the nucleus. It is found in the chromosome. Functionally, protamines substitute for histones in the chromatin of sperm during the haploid phase of spermatogenesis. They compact sperm DNA into a highly condensed, stable and inactive complex. The sequence is that of Sperm protamine P1 (PRM1) from Galeopterus variegatus (Malayan flying lemur).